A 408-amino-acid chain; its full sequence is GTPase Obg (408 aa).

One can recognise an Obg domain in the interval 1–159; that stretch reads MKFVDEVSIR…RDLKMEMKVL (159 aa). The disordered stretch occupies residues 127 to 150; sequence NTRFKSSTNRAPRQTTPGKPGDQR. Polar residues predominate over residues 129 to 143; that stretch reads RFKSSTNRAPRQTTP. The region spanning 160–333 is the OBG-type G domain; sequence ADVGLLGLPN…LSHDLMRYLE (174 aa). GTP is bound by residues 166–173, 191–195, 213–216, 283–286, and 314–316; these read GLPNAGKS, FTTLV, DIPG, NKSD, and SAI. Residues S173 and T193 each coordinate Mg(2+). Residues 382–408 are disordered; sequence HDIGDDDGWDDDFEDDEDGPEIIYVRD. Over residues 385–401 the composition is skewed to acidic residues; it reads GDDDGWDDDFEDDEDGP.

This sequence belongs to the TRAFAC class OBG-HflX-like GTPase superfamily. OBG GTPase family. Monomer. Requires Mg(2+) as cofactor.

The protein localises to the cytoplasm. In terms of biological role, an essential GTPase which binds GTP, GDP and possibly (p)ppGpp with moderate affinity, with high nucleotide exchange rates and a fairly low GTP hydrolysis rate. Plays a role in control of the cell cycle, stress response, ribosome biogenesis and in those bacteria that undergo differentiation, in morphogenesis control. This Pseudomonas putida (strain GB-1) protein is GTPase Obg.